The sequence spans 104 residues: Protein S100-A14 (104 aa).

Residues 27–61 form the EF-hand domain; that stretch reads KNFHQYSVEGGKETLTPSELRDLVTQQLPHLMPSN.

This sequence belongs to the S-100 family. Homodimer. Interacts with AGER.

Its subcellular location is the cytoplasm. Its function is as follows. Modulates P53/TP53 protein levels, and thereby plays a role in the regulation of cell survival and apoptosis. Depending on the context, it can promote cell proliferation or apoptosis. Plays a role in the regulation of cell migration by modulating the levels of MMP2, a matrix protease that is under transcriptional control of P53/TP53. Does not bind calcium. This Bos taurus (Bovine) protein is Protein S100-A14 (S100A14).